Reading from the N-terminus, the 98-residue chain is MNIKLTQKAVEWFKNELDLPISNKVLQFYVKYGGEFQLKQGFSPAFTVENKDAIDIGFEQTFYEINVVIAEKDLWYFQDEKLTVDAIDHEDEIIYKRN.

This sequence belongs to the HesB/IscA family.

This is an uncharacterized protein from Staphylococcus epidermidis (strain ATCC 35984 / DSM 28319 / BCRC 17069 / CCUG 31568 / BM 3577 / RP62A).